The primary structure comprises 447 residues: Large ribosomal subunit protein bL27m (447 aa).

Basic and acidic residues-rich tracts occupy residues 377–402 and 409–447; these read QREA…KAEK and KVEK…EKKD. Residues 377–447 form a disordered region; that stretch reads QREAKKAREG…KKDSKTEKKD (71 aa).

Belongs to the bacterial ribosomal protein bL27 family. Component of the mitochondrial large ribosomal subunit (mt-LSU). Mature N.crassa 74S mitochondrial ribosomes consist of a small (37S) and a large (54S) subunit. The 37S small subunit contains a 16S ribosomal RNA (16S mt-rRNA) and 32 different proteins. The 54S large subunit contains a 23S rRNA (23S mt-rRNA) and 42 different proteins.

It localises to the mitochondrion. In terms of biological role, component of the mitochondrial ribosome (mitoribosome), a dedicated translation machinery responsible for the synthesis of mitochondrial genome-encoded proteins, including at least some of the essential transmembrane subunits of the mitochondrial respiratory chain. The mitoribosomes are attached to the mitochondrial inner membrane and translation products are cotranslationally integrated into the membrane. The polypeptide is Large ribosomal subunit protein bL27m (mrp7) (Neurospora crassa (strain ATCC 24698 / 74-OR23-1A / CBS 708.71 / DSM 1257 / FGSC 987)).